A 327-amino-acid chain; its full sequence is Polyprenyl transferase andD (327 aa).

The next 8 helical transmembrane spans lie at 49-69 (LGYILVCYPFLVAGAFSASIA), 81-101 (ITLLCLWSIFLRSGGCIWDDI), 140-160 (FAFVAELPGVCMVDALIMLFF), 174-194 (PQLILGTIGWAIPMTMHGLNL), 201-221 (IPMAAMFAFIALVTIMNDIIY), 244-264 (CLDALTFALVFASSAALVIAG), 271-291 (APFFTISVGGHFGFFLFLAMA), and 307-327 (CCTSATFLLIVGMVVDLVWRS).

This sequence belongs to the UbiA prenyltransferase family. Mg(2+) serves as cofactor.

It localises to the membrane. It participates in secondary metabolite biosynthesis; terpenoid biosynthesis. Its function is as follows. Polyprenyl transferase; part of the gene cluster that mediates the biosynthesis of anditomin, a fungal meroterpenoid. The first step of the pathway is the synthesis of 3,5-dimethylorsellinic acid (DMOA) by the polyketide synthase andM. DMOA is then converted to the phthalide compound 5,7-dihydroxy-4,6-dimethylphthalide (DHDMP) by the cytochrome P450 monooxygenase andK, which is further prenylated by the prenyltransferase andD to yield farnesyl-DHDMP. Further epoxidation by the FAD-dependent monooxygenase andE leads to epoxyfarnesyl-DHDMP. The next step involves the terpene cyclase andB that converts epoxyfarnesyl-DHDMP into preandiloid A through opening of the epoxide ring followed by the cyclization of the farnesyl moiety. Preandiloid A is in turn oxidized at the C-3 hydroxyl group to yield preandiloid B by the dehydrogenase andC. The dioxygenase andA is solely responsible for the dehydrogenation of preandiloid B leading to the enone preandiloid C, as well as for the intriguing structural rearrangement to generate the bicyclo[2.2.2]octane core, transforming preandiloid C into andiconin. FAD-binding monooxygenase andJ then produces andilesin D which is reduced by dehydrogenase andI to yield andilesin A. Action of acetyltransferase andG followed by a spontaneous acetate elimination leads then to andilesin B, which is in turn substrate of the short chain dehydrogenase andH to yield andilesin C. Finally, the dioxygenase andF catalyzes the transformation of andilesin C to anditomin. The protein is Polyprenyl transferase andD of Emericella variicolor (Aspergillus stellatus).